The chain runs to 500 residues: Glycerol kinase (500 aa).

Residue Thr-13 participates in ADP binding. Residues Thr-13, Thr-14, and Ser-15 each contribute to the ATP site. Thr-13 lines the sn-glycerol 3-phosphate pocket. Arg-17 provides a ligand contact to ADP. Residues Arg-83, Glu-84, Tyr-135, and Asp-245 each coordinate sn-glycerol 3-phosphate. The glycerol site is built by Arg-83, Glu-84, Tyr-135, Asp-245, and Gln-246. ADP-binding residues include Thr-267 and Gly-310. The ATP site is built by Thr-267, Gly-310, Gln-314, and Gly-411. ADP contacts are provided by Gly-411 and Asn-415.

It belongs to the FGGY kinase family. As to quaternary structure, homotetramer and homodimer (in equilibrium).

It catalyses the reaction glycerol + ATP = sn-glycerol 3-phosphate + ADP + H(+). It participates in polyol metabolism; glycerol degradation via glycerol kinase pathway; sn-glycerol 3-phosphate from glycerol: step 1/1. Its activity is regulated as follows. Activated by phosphorylation and inhibited by fructose 1,6-bisphosphate (FBP). Functionally, key enzyme in the regulation of glycerol uptake and metabolism. Catalyzes the phosphorylation of glycerol to yield sn-glycerol 3-phosphate. The chain is Glycerol kinase from Lactobacillus acidophilus (strain ATCC 700396 / NCK56 / N2 / NCFM).